The following is a 91-amino-acid chain: Acylphosphatase (91 aa).

The Acylphosphatase-like domain occupies arginine 5–tyrosine 91. Catalysis depends on residues arginine 20 and asparagine 38.

Belongs to the acylphosphatase family.

It catalyses the reaction an acyl phosphate + H2O = a carboxylate + phosphate + H(+). The chain is Acylphosphatase (acyP) from Metallosphaera sedula (strain ATCC 51363 / DSM 5348 / JCM 9185 / NBRC 15509 / TH2).